The sequence spans 211 residues: Thiamine-phosphate synthase (211 aa).

4-amino-2-methyl-5-(diphosphooxymethyl)pyrimidine is bound by residues 37–41 (QLRIK) and N69. Mg(2+)-binding residues include D70 and D89. Position 108 (S108) interacts with 4-amino-2-methyl-5-(diphosphooxymethyl)pyrimidine. A 2-[(2R,5Z)-2-carboxy-4-methylthiazol-5(2H)-ylidene]ethyl phosphate-binding site is contributed by 134-136 (TQT). K137 contributes to the 4-amino-2-methyl-5-(diphosphooxymethyl)pyrimidine binding site. 2-[(2R,5Z)-2-carboxy-4-methylthiazol-5(2H)-ylidene]ethyl phosphate-binding positions include G166 and 186–187 (VS).

It belongs to the thiamine-phosphate synthase family. The cofactor is Mg(2+).

It carries out the reaction 2-[(2R,5Z)-2-carboxy-4-methylthiazol-5(2H)-ylidene]ethyl phosphate + 4-amino-2-methyl-5-(diphosphooxymethyl)pyrimidine + 2 H(+) = thiamine phosphate + CO2 + diphosphate. The enzyme catalyses 2-(2-carboxy-4-methylthiazol-5-yl)ethyl phosphate + 4-amino-2-methyl-5-(diphosphooxymethyl)pyrimidine + 2 H(+) = thiamine phosphate + CO2 + diphosphate. The catalysed reaction is 4-methyl-5-(2-phosphooxyethyl)-thiazole + 4-amino-2-methyl-5-(diphosphooxymethyl)pyrimidine + H(+) = thiamine phosphate + diphosphate. It participates in cofactor biosynthesis; thiamine diphosphate biosynthesis; thiamine phosphate from 4-amino-2-methyl-5-diphosphomethylpyrimidine and 4-methyl-5-(2-phosphoethyl)-thiazole: step 1/1. Its function is as follows. Condenses 4-methyl-5-(beta-hydroxyethyl)thiazole monophosphate (THZ-P) and 2-methyl-4-amino-5-hydroxymethyl pyrimidine pyrophosphate (HMP-PP) to form thiamine monophosphate (TMP). The chain is Thiamine-phosphate synthase from Escherichia coli O6:H1 (strain CFT073 / ATCC 700928 / UPEC).